The following is a 342-amino-acid chain: tRNA N6-adenosine threonylcarbamoyltransferase (342 aa).

Residues histidine 111 and histidine 115 each contribute to the Fe cation site. Substrate is bound by residues 134 to 138, aspartate 167, glycine 180, aspartate 184, and asparagine 273; that span reads LVSGG. Aspartate 298 is a binding site for Fe cation.

The protein belongs to the KAE1 / TsaD family. The cofactor is Fe(2+).

It is found in the cytoplasm. It catalyses the reaction L-threonylcarbamoyladenylate + adenosine(37) in tRNA = N(6)-L-threonylcarbamoyladenosine(37) in tRNA + AMP + H(+). Its function is as follows. Required for the formation of a threonylcarbamoyl group on adenosine at position 37 (t(6)A37) in tRNAs that read codons beginning with adenine. Is involved in the transfer of the threonylcarbamoyl moiety of threonylcarbamoyl-AMP (TC-AMP) to the N6 group of A37, together with TsaE and TsaB. TsaD likely plays a direct catalytic role in this reaction. In Gloeobacter violaceus (strain ATCC 29082 / PCC 7421), this protein is tRNA N6-adenosine threonylcarbamoyltransferase.